Here is a 434-residue protein sequence, read N- to C-terminus: Arrestin domain-containing protein 1 (434 aa).

Positions 295–345 (PGPGSSPGLLSPVVPSAPPQEEAEAVASGPHFSDPVSLSTKSHSQQQPLST) are disordered. The segment covering 330 to 342 (VSLSTKSHSQQQP) has biased composition (polar residues). Short sequence motifs (PPxY motif) lie at residues 401–404 (PPEY) and 414–417 (PPSY).

The protein belongs to the arrestin family. Interacts (via PPxY motifs) with ITCH (via WW domains); the interaction is direct and participates in the recruitment of the ubiquitin-protein ligase ITCH to the NOTCH1 receptor. Interacts with ARRB1 and ARRB2; the interaction is direct. Interacts with TSG101; may recruit TSG101 to the plasma membrane. Interacts (via PPxY motifs) with WWP2 (via WW domains); ubiquitinates ARRDC1. Interacts with SLC11A2; controls the incorporation of SLC11A2 into extracellular vesicles through an ubiquitination-dependent mechanism. Interacts with WWP1 (via WW domains). Interacts with NEDD4 (via WW domains). Interacts with PDCD6IP. Ubiquitinated. Ubiquitination by WWP2; promotes localization to extracellular microvesicles. Ubiquitinated by WWP1.

It localises to the cell membrane. Functionally, functions as an adapter recruiting ubiquitin-protein ligases to their specific substrates. Through an ubiquitination-dependent mechanism plays for instance a role in the incorporation of SLC11A2 into extracellular vesicles. More generally, plays a role in the extracellular transport of proteins between cells through the release in the extracellular space of microvesicles. By participating in the ITCH-mediated ubiquitination and subsequent degradation of NOTCH1, negatively regulates the NOTCH signaling pathway. In Rattus norvegicus (Rat), this protein is Arrestin domain-containing protein 1.